Reading from the N-terminus, the 86-residue chain is Small ribosomal subunit protein uS15c (86 aa).

Belongs to the universal ribosomal protein uS15 family. As to quaternary structure, part of the 30S ribosomal subunit.

It is found in the plastid. The sequence is that of Small ribosomal subunit protein uS15c (rps15) from Cuscuta obtusiflora (Peruvian dodder).